A 308-amino-acid chain; its full sequence is Putative transposon Ty5-1 protein YCL074W (308 aa).

This chain is Putative transposon Ty5-1 protein YCL074W (TY5A), found in Saccharomyces cerevisiae (strain ATCC 204508 / S288c) (Baker's yeast).